Reading from the N-terminus, the 560-residue chain is Membrane protein insertase YidC (560 aa).

Helical transmembrane passes span 5 to 25, 334 to 354, 357 to 377, 431 to 451, 476 to 496, and 522 to 542; these read IINL…WQYF, AIDF…MNFF, YVGN…LLMF, LPIL…YVTI, LFGL…WPIL, and FMPL…LIYW.

This sequence belongs to the OXA1/ALB3/YidC family. Type 1 subfamily. In terms of assembly, interacts with the Sec translocase complex via SecD. Specifically interacts with transmembrane segments of nascent integral membrane proteins during membrane integration.

Its subcellular location is the cell inner membrane. Functionally, required for the insertion and/or proper folding and/or complex formation of integral membrane proteins into the membrane. Involved in integration of membrane proteins that insert both dependently and independently of the Sec translocase complex, as well as at least some lipoproteins. Aids folding of multispanning membrane proteins. This chain is Membrane protein insertase YidC, found in Rickettsia massiliae (strain Mtu5).